The primary structure comprises 811 residues: Capsid protein VP1 (811 aa).

Residues 321–367 are disordered; sequence DSPMQEATKRKADSPAVETPAKKGTTGVNVNSQSTDPQNPSSSGATT. Positions 346–366 are enriched in polar residues; the sequence is TGVNVNSQSTDPQNPSSSGAT.

The protein resides in the virion. In terms of biological role, capsid protein self-assembles to form an icosahedral capsid with a T=1 symmetry, about 22 nm in diameter, and consisting of 60 copies of size variants of the capsid proteins, which differ in the N-terminushe capsid encapsulates the genomic ssDNA. Capsid proteins are responsible for the attachment to host cell receptors. This attachment induces virion internalization predominantly through clathrin-dependent endocytosis. The polypeptide is Capsid protein VP1 (VP) (Galleria mellonella densovirus (GmDNV)).